The primary structure comprises 827 residues: Transcription factor SOX-6 (827 aa).

Polar residues predominate over residues 1–10 (MSSKQATSPF). The disordered stretch occupies residues 1 to 51 (MSSKQATSPFACTADGEEAMTQDLTSREKEEGSDQHPASHLPLHPIMHNKP). The segment covering 25–34 (TSREKEEGSD) has biased composition (basic and acidic residues). T119 carries the post-translational modification Phosphothreonine. The stretch at 184–262 (LAEKERQLST…LLQQQIQVQG (79 aa)) forms a coiled coil. Disordered regions lie at residues 334 to 361 (QINP…GHSY) and 379 to 470 (VSPG…PIGG). Over residues 341–357 (GISDRFGRNLDPSEHGG) the composition is skewed to basic and acidic residues. S399 bears the Phosphoserine mark. Phosphothreonine is present on T401. Glycyl lysine isopeptide (Lys-Gly) (interchain with G-Cter in SUMO) cross-links involve residues K404 and K417. Polar residues-rich tracts occupy residues 421–431 (TAQPLNLSSRP) and 439–461 (SPTS…LPNK). A phosphoserine mark is found at S439 and S442. Positions 620–688 (IKRPMNAFMV…IHLEKYPNYK (69 aa)) form a DNA-binding region, HMG box. Disordered regions lie at residues 752-772 (TPSP…EPSL) and 786-827 (ASLA…VSAN). Residues 795 to 808 (NGEDEMEAYDDYED) show a composition bias toward acidic residues.

In terms of assembly, homodimer. Interacts with DAZAP2. May interact with CENPK. In terms of processing, sumoylation inhibits the transcriptional activity. In terms of tissue distribution, highly expressed in testis.

The protein resides in the nucleus. Its subcellular location is the cytoplasm. Functionally, transcription factor that plays a key role in several developmental processes, including neurogenesis, chondrocytes differentiation and cartilage formation. Specifically binds the 5'-AACAAT-3' DNA motif present in enhancers and super-enhancers and promotes expression of genes important for chondrogenesis. Required for overt chondrogenesis when condensed prechondrocytes differentiate into early stage chondrocytes: SOX5 and SOX6 cooperatively bind with SOX9 on active enhancers and super-enhancers associated with cartilage-specific genes, and thereby potentiate SOX9's ability to transactivate. Not involved in precartilaginous condensation, the first step in chondrogenesis, during which skeletal progenitors differentiate into prechondrocytes. Together with SOX5, required to form and maintain a pool of highly proliferating chondroblasts between epiphyses and metaphyses, to form columnar chondroblasts, delay chondrocyte prehypertrophy but promote hypertrophy, and to delay terminal differentiation of chondrocytes on contact with ossification fronts. Binds to the proximal promoter region of the myelin protein MPZ gene, and is thereby involved in the differentiation of oligodendroglia in the developing spinal tube. Binds to the gene promoter of MBP and acts as a transcriptional repressor. The protein is Transcription factor SOX-6 of Mus musculus (Mouse).